Reading from the N-terminus, the 292-residue chain is NAD kinase (292 aa).

The active-site Proton acceptor is Asp72. Residues 72 to 73 (DG), 146 to 147 (NE), His157, Arg174, Asp176, and 187 to 192 (TAYSLS) contribute to the NAD(+) site.

It belongs to the NAD kinase family. A divalent metal cation is required as a cofactor.

It is found in the cytoplasm. The enzyme catalyses NAD(+) + ATP = ADP + NADP(+) + H(+). Involved in the regulation of the intracellular balance of NAD and NADP, and is a key enzyme in the biosynthesis of NADP. Catalyzes specifically the phosphorylation on 2'-hydroxyl of the adenosine moiety of NAD to yield NADP. The chain is NAD kinase from Shewanella loihica (strain ATCC BAA-1088 / PV-4).